Reading from the N-terminus, the 388-residue chain is Cuticle-degrading protease (388 aa).

An N-terminal signal peptide occupies residues Met1 to Ala18. Positions Thr19–Ser107 are excised as a propeptide. In terms of domain architecture, Inhibitor I9 spans Lys41–Ile106. Residues Pro116–Ala388 form the Peptidase S8 domain. 2 disulfide bridges follow: Cys143–Cys233 and Cys288–Cys360. Residues Asp148 and His179 each act as charge relay system in the active site. The N-linked (GlcNAc...) asparagine glycan is linked to Asn296. Ser334 acts as the Charge relay system in catalysis.

This sequence belongs to the peptidase S8 family.

The protein localises to the secreted. Capable of breaching the insect cuticle. The sequence is that of Cuticle-degrading protease (PR1) from Metarhizium anisopliae (Entomophthora anisopliae).